The sequence spans 696 residues: Serotransferrin (696 aa).

2 Transferrin-like domains span residues 6-332 and 346-672; these read VRWC…NLRE and VRWC…NLRK. 2 cysteine pairs are disulfide-bonded: Cys9–Cys47 and Cys19–Cys38. Arg23 bears the Dimethylated arginine mark. Asn25 is a glycosylation site (N-linked (GlcNAc...) asparagine). Fe(3+) contacts are provided by Asp62 and Tyr94. Intrachain disulfides connect Cys117–Cys198, Cys157–Cys173, Cys160–Cys181, Cys170–Cys183, and Cys231–Cys245. Residues Thr119, Arg123, Ala125, and Gly126 each contribute to the hydrogencarbonate site. Residue Tyr192 coordinates Fe(3+). A Fe(3+)-binding site is contributed by His253. Cystine bridges form between Cys343–Cys605, Cys349–Cys381, Cys359–Cys372, Cys406–Cys682, Cys423–Cys646, Cys456–Cys532, Cys480–Cys673, Cys490–Cys504, Cys501–Cys515, Cys572–Cys586, and Cys624–Cys629. Ser374 carries the phosphoserine modification. Fe(3+) contacts are provided by Asp396 and Tyr431. 4 residues coordinate hydrogencarbonate: Thr458, Arg462, Ala464, and Gly465. Asn497 carries an N-linked (GlcNAc...) asparagine glycan. Fe(3+) is bound at residue Tyr526. Fe(3+) is bound at residue His594. The residue at position 674 (Ser674) is a Phosphoserine.

This sequence belongs to the transferrin family. In terms of assembly, monomer. Part of a complex composed of SLC40A1/ferroportin, TF/transferrin and HEPH/hephaestin that transfers iron from cells to transferrin. In terms of tissue distribution, expressed by the liver and secreted in plasma.

It localises to the secreted. Functionally, transferrins are iron binding transport proteins which can bind two Fe(3+) ions in association with the binding of an anion, usually bicarbonate. It is responsible for the transport of iron from sites of absorption and heme degradation to those of storage and utilization. Serum transferrin may also have a further role in stimulating cell proliferation. The chain is Serotransferrin (TF) from Sus scrofa (Pig).